The chain runs to 2892 residues: E3 ubiquitin-protein ligase lubel (2892 aa).

Disordered stretches follow at residues aspartate 23–proline 55, lysine 125–lysine 252, serine 395–serine 423, proline 483–glycine 631, glutamine 644–glutamine 672, alanine 685–glutamate 737, cysteine 757–leucine 865, and aspartate 949–serine 975. Residues glycine 40 to lysine 52 are compositionally biased toward low complexity. Residues glycine 189–alanine 198 are compositionally biased toward gly residues. A compositionally biased stretch (polar residues) spans alanine 206–asparagine 215. Composition is skewed to low complexity over residues alanine 402–histidine 412 and proline 483–arginine 503. Acidic residues predominate over residues valine 516–glutamine 528. The segment covering valine 535–arginine 546 has biased composition (polar residues). Positions serine 547–arginine 560 are enriched in basic residues. Positions glycine 606 to isoleucine 623 are enriched in polar residues. Residues glutamine 647 to asparagine 670 are compositionally biased toward basic and acidic residues. The segment covering lysine 801 to serine 813 has biased composition (polar residues). Composition is skewed to low complexity over residues serine 818–serine 837 and lysine 846–serine 856. The UBA-like 1 domain maps to methionine 1042 to glycine 1187. Disordered stretches follow at residues leucine 1214–glutamine 1252, leucine 1477–threonine 1520, alanine 1557–serine 1653, serine 1717–glutamate 2019, arginine 2032–threonine 2082, serine 2191–serine 2316, and aspartate 2411–lysine 2431. Over residues valine 1241 to glutamine 1252 the composition is skewed to polar residues. Over residues glutamate 1510–glutamate 1519 the composition is skewed to basic and acidic residues. A compositionally biased stretch (polar residues) spans glutamine 1560–arginine 1571. Residues arginine 1576 to arginine 1587 are compositionally biased toward basic residues. A compositionally biased stretch (polar residues) spans proline 1595–glutamine 1607. The segment covering lysine 1608 to leucine 1627 has biased composition (basic and acidic residues). 3 stretches are compositionally biased toward polar residues: residues alanine 1630–serine 1653, serine 1717–glycine 1726, and lysine 1764–isoleucine 1779. The span at leucine 1822–serine 1834 shows a compositional bias: low complexity. Residues threonine 1859–threonine 1881 are compositionally biased toward polar residues. Over residues aspartate 1918–proline 1927 the composition is skewed to acidic residues. The span at aspartate 1953–glutamate 1963 shows a compositional bias: basic and acidic residues. Composition is skewed to acidic residues over residues aspartate 1964–glutamine 1975 and serine 2036–glutamate 2079. 2 stretches are compositionally biased toward low complexity: residues proline 2214 to isoleucine 2230 and serine 2269 to lysine 2291. Residues asparagine 2297 to leucine 2308 are compositionally biased toward polar residues. A compositionally biased stretch (acidic residues) spans aspartate 2411–asparagine 2425. Positions aspartate 2457–glutamate 2513 constitute a UBA-like 2 domain. The interval leucine 2510–asparagine 2748 is TRIAD supradomain. Zn(2+)-binding residues include cysteine 2514, cysteine 2517, cysteine 2537, cysteine 2540, cysteine 2618, cysteine 2621, cysteine 2636, cysteine 2639, cysteine 2644, cysteine 2647, histidine 2655, cysteine 2660, cysteine 2690, and cysteine 2693. The RING-type 1 zinc-finger motif lies at cysteine 2514 to leucine 2564. The interval cysteine 2514–alanine 2892 is necessary for linear polyubiquitination and sufficent for inducing DptA in the intestine. Residues glutamine 2601–cysteine 2660 form an IBR-type zinc finger. Residues cysteine 2690–cysteine 2720 form an RING-type 2; atypical zinc finger. Cysteine 2704 is an active-site residue. Zn(2+) contacts are provided by cysteine 2709 and cysteine 2712.

The protein belongs to the RBR family.

The catalysed reaction is [E2 ubiquitin-conjugating enzyme]-S-ubiquitinyl-L-cysteine + [acceptor protein]-L-lysine = [E2 ubiquitin-conjugating enzyme]-L-cysteine + [acceptor protein]-N(6)-ubiquitinyl-L-lysine.. E3 ubiquitin-protein ligase which conjugates linear 'Met-1'- and 'Lys-63'-linked polyubiquitin chains to substrates and plays a crucial role in the NF-kappa-B intestinal inflammatory response to oral infection and in the heat stress response. Preferentially interacts with 'Lys-63'-linked, and to a lesser extent 'Lys-48'-linked, polyubiquitin chains. Upon oral infection with a Gram-negative bacterium E.carotovora subsp. carotovora 15, functions with the E2 ubiquitin-conjugating enzyme Ubc10 to mediate the conjugation of 'Lys-63'- and linear 'Met-1'-linked polyubiquitin chains to the substrate key which is essential for activation of the NF-kappa-B signaling cascade in the adult intestinal epithelium. It is not required for systemic immune response to septic infection with either E.carotovora subsp. carotovora 15 or Gram-positive M.luteus bacteria. Function in controlling linear ubiquitination is also essential for regulating the heat stress response in adults. This function may require the E2 ubiquitin-conjugating enzymes Ubc10 or eff. The chain is E3 ubiquitin-protein ligase lubel from Drosophila melanogaster (Fruit fly).